The sequence spans 732 residues: Elongation factor 2 (732 aa).

Residues 19–230 enclose the tr-type G domain; that stretch reads ERIRNMGIAA…VSFKDIIDLT (212 aa). Residues 28 to 35, 94 to 98, and 148 to 151 each bind GTP; these read AHIDHGKT, DTPGH, and NKVD. A Diphthamide modification is found at His597.

Belongs to the TRAFAC class translation factor GTPase superfamily. Classic translation factor GTPase family. EF-G/EF-2 subfamily.

The protein resides in the cytoplasm. In terms of biological role, catalyzes the GTP-dependent ribosomal translocation step during translation elongation. During this step, the ribosome changes from the pre-translocational (PRE) to the post-translocational (POST) state as the newly formed A-site-bound peptidyl-tRNA and P-site-bound deacylated tRNA move to the P and E sites, respectively. Catalyzes the coordinated movement of the two tRNA molecules, the mRNA and conformational changes in the ribosome. The chain is Elongation factor 2 from Thermococcus sibiricus (strain DSM 12597 / MM 739).